The following is a 717-amino-acid chain: Homeobox protein araucan (717 aa).

Disordered stretches follow at residues 46 to 80 (APAMSPTGGQDCQGSQPSGGAGGDASSGALSPNAL), 94 to 130 (GGSSAGGGGPADLATGGSLDGNGVGTTPTAGGAGGGG), 317 to 371 (NKMT…AIDE), 395 to 418 (SGGYPGGGGSSSGHPGGYHPYHHQ), 478 to 516 (TPPPAYMGHQSMPLQQQQQQQQQQQQAQHQYPPSEAGRD), 549 to 615 (TNNS…ASQR), and 675 to 717 (ARLG…KFTN). The span at 94-103 (GGSSAGGGGP) shows a compositional bias: gly residues. The homeobox; TALE-type DNA-binding region spans 255-317 (LAARRKNATR…NARRRLKKEN (63 aa)). Over residues 317–327 (NKMTWEPKNRT) the composition is skewed to basic and acidic residues. Serine 336 is modified (phosphoserine). Basic and acidic residues predominate over residues 337-347 (DDEKDKEDLEP). A compositionally biased stretch (gly residues) spans 395–410 (SGGYPGGGGSSSGHPG). Low complexity-rich tracts occupy residues 492-507 (QQQQQQQQQQQQAQHQ), 559-589 (PPQQQQPQQQQQQLQQGGTIHTTGSSSGPII), 599-614 (QQQQQLQQQSQSTASQ), and 687-698 (SSGNSSSSSSSS).

This sequence belongs to the TALE/IRO homeobox family.

Its subcellular location is the nucleus. Functionally, controls proneural and vein forming genes. Positive transcriptional controller of AC-SC (achaete-scute). May act as an activator that interacts with the transcriptional complex assembled on the AC and SC promoters and participates in transcription initiation. In Drosophila melanogaster (Fruit fly), this protein is Homeobox protein araucan (ara).